Consider the following 132-residue polypeptide: Large ribosomal subunit protein bL21 (132 aa).

Positions Ala112–Ala132 are disordered.

It belongs to the bacterial ribosomal protein bL21 family. As to quaternary structure, part of the 50S ribosomal subunit. Contacts protein L20.

Functionally, this protein binds to 23S rRNA in the presence of protein L20. The polypeptide is Large ribosomal subunit protein bL21 (Dehalococcoides mccartyi (strain ATCC BAA-2266 / KCTC 15142 / 195) (Dehalococcoides ethenogenes (strain 195))).